The sequence spans 355 residues: Aurora kinase (355 aa).

Positions 89–340 (FEIGKPLGKG…LEQVMRHPWI (252 aa)) constitute a Protein kinase domain. ATP-binding positions include 95–103 (LGKGKFGRV) and K118. D212 (proton acceptor) is an active-site residue.

The protein belongs to the protein kinase superfamily. Ser/Thr protein kinase family. Aurora subfamily. In terms of assembly, component of the CPC complex at least composed of ark1, bir1 and pic1. Interacts with the mitotic checkpoint complex (MCC) subunit mad3.

The protein localises to the nucleus. The protein resides in the cytoplasm. It is found in the cytoskeleton. Its subcellular location is the spindle. It carries out the reaction L-seryl-[protein] + ATP = O-phospho-L-seryl-[protein] + ADP + H(+). The catalysed reaction is L-threonyl-[protein] + ATP = O-phospho-L-threonyl-[protein] + ADP + H(+). Functionally, component of the chromosomal passenger complex (CPC), a complex that acts as a key regulator of chromosome segregation and cytokinesis. Has a role in error-correction of aberrent kinetochore-microtubule attachments to ensure that sister kinetochores become bioriented and connect to opposite poles by promoting spindle assembly checkpoint signaling. Ark1 is also required for phosphorylation of histone H3 that accompanies chromosome condensation and condensin recruitment to mitotic chromatin. The sequence is that of Aurora kinase (ark1) from Schizosaccharomyces pombe (strain 972 / ATCC 24843) (Fission yeast).